Here is a 278-residue protein sequence, read N- to C-terminus: MAIRKYKPTTPGRRGSSVSDFAEITRSTPEKSLVRPLHGRGGRNAHGRITTRHKGGGHKRAYRLIDFRRNDKDGIPAKVAHIEYDPNRTANIALLHYADGEKRYIIAPKGLVQGSPVESGAGADIKPGNNLPLRNIPTGTTIHGVELRPGGGAKMARSAGASIQLLGKEGSYATLRMPSGEIRRVDVRCRASVGEVGNAEQSNINWGKAGRMRWKGKRPTVRGVVMNPVDHPHGGGEGKTSGGRHPVSPWGKPEGRTRKNKASDKMIVRRRRTGKNKR.

Disordered regions lie at residues methionine 1–histidine 58 and valine 225–arginine 278. A compositionally biased stretch (basic residues) spans leucine 37 to histidine 58. Basic and acidic residues predominate over residues proline 253–isoleucine 267. A compositionally biased stretch (basic residues) spans valine 268–arginine 278.

Belongs to the universal ribosomal protein uL2 family. Part of the 50S ribosomal subunit. Forms a bridge to the 30S subunit in the 70S ribosome.

One of the primary rRNA binding proteins. Required for association of the 30S and 50S subunits to form the 70S ribosome, for tRNA binding and peptide bond formation. It has been suggested to have peptidyltransferase activity; this is somewhat controversial. Makes several contacts with the 16S rRNA in the 70S ribosome. This chain is Large ribosomal subunit protein uL2, found in Rhodococcus erythropolis (strain PR4 / NBRC 100887).